A 155-amino-acid chain; its full sequence is 3-hydroxyacyl-[acyl-carrier-protein] dehydratase FabZ (155 aa).

The active site involves His-59.

The protein belongs to the thioester dehydratase family. FabZ subfamily.

The protein localises to the cytoplasm. The enzyme catalyses a (3R)-hydroxyacyl-[ACP] = a (2E)-enoyl-[ACP] + H2O. Functionally, involved in unsaturated fatty acids biosynthesis. Catalyzes the dehydration of short chain beta-hydroxyacyl-ACPs and long chain saturated and unsaturated beta-hydroxyacyl-ACPs. This chain is 3-hydroxyacyl-[acyl-carrier-protein] dehydratase FabZ, found in Bartonella henselae (strain ATCC 49882 / DSM 28221 / CCUG 30454 / Houston 1) (Rochalimaea henselae).